A 306-amino-acid chain; its full sequence is Glutaminase (306 aa).

Ser-64, Asn-115, Glu-159, Asn-166, Tyr-190, Tyr-242, and Val-260 together coordinate substrate.

The protein belongs to the glutaminase family. Homotetramer.

It carries out the reaction L-glutamine + H2O = L-glutamate + NH4(+). This chain is Glutaminase, found in Aeromonas salmonicida (strain A449).